The chain runs to 737 residues: Catalase-peroxidase 2 (737 aa).

The tract at residues 1–33 is disordered; the sequence is MPEATEHPPIGEAQTEPAQSGCPMVIKPPVEGG. Residues 107–235 constitute a cross-link (tryptophyl-tyrosyl-methioninium (Trp-Tyr) (with M-261)); sequence WHAAGTYRVQ…LGASHMGLIY (129 aa). His108 serves as the catalytic Proton acceptor. The segment at residues 235-261 is a cross-link (tryptophyl-tyrosyl-methioninium (Tyr-Met) (with W-107)); sequence YVNPEGPEGNPDPIAAAIDIRETFGRM. His276 serves as a coordination point for heme.

It belongs to the peroxidase family. Peroxidase/catalase subfamily. Homodimer or homotetramer. Requires heme b as cofactor. Post-translationally, formation of the three residue Trp-Tyr-Met cross-link is important for the catalase, but not the peroxidase activity of the enzyme.

It catalyses the reaction H2O2 + AH2 = A + 2 H2O. The catalysed reaction is 2 H2O2 = O2 + 2 H2O. In terms of biological role, bifunctional enzyme with both catalase and broad-spectrum peroxidase activity. This Mycolicibacterium vanbaalenii (strain DSM 7251 / JCM 13017 / BCRC 16820 / KCTC 9966 / NRRL B-24157 / PYR-1) (Mycobacterium vanbaalenii) protein is Catalase-peroxidase 2.